The primary structure comprises 1515 residues: MDNQQDKVIAASANGDNNLINGVKNNDSEDQEVAMKSFVALEATTPIQPIPVIQKESPMFPRGLLPPPSKKPCMQSPPSPLALIEAPDHSANSASVNAISLTSGVAKGLNTWSLPNECEKAPFAIMEPAGMSALNGDCLMQPSRTCLGCFMESKEAVDPEPGISLKVSDLNRDYETCAVSDIGIQCINAGENIKYGEQLLSDQLLGFPLHKSRAGDRRESEKPDIDLEDPTQKSYYEALLLDKCNTEEALLANSNQDWGYFETFISESKIELLDLCSKNELSVNLFSEEDVENYMFDDDESTLGSDVCSLKIRYESFQDNVRDKTTLLMQEDAQFNFFPSVFTTCPKRESKSGILKQSSDLSQFKVPDVSIIWGEEDKNLDKKKGKEEVHEDKSIETKDEKDNGEKPALNNKPCGGLEVEQFKNLKADQLTNSLETSGNFSDDSSFIEVSYDAMGEIKDCSRYMARDTNSGSSSSQQNYGLRAKRKVRYSEDYLYDVDSLEGEKVNERKEWPPGGSKEEDDDEWCPKKRRKVTRKEPPVIIKYIIINRFKGEKNMLVKLSKVDASETTVNLSENQLSKYAKLSPLKGFWQKKKKQKNSNTDSVKTPLCQKQSFEPGSFEVSFLPPARKRKSKLGNRHRIQRIQSVETSASSKQVSFCSDQKQACNRKEDGVKGTPKSALLTDPSCANGSHLRGLIVSDSVKVKAQDTEFKGPERKVLNKIKFKSEARLKSKKIKAGQENKPVVQMSPVSEDTSSKANLKNEVTPGTSNSSHMSEFHETKVKNSTFLPTTCSSEMPLSSANVATNIPVIPGGYLQTLLDASDLSNNTSISYFTNHSAEQNEGSLTQTEKAFVPLQSAQDCVLSSSSDSQLQQSSQNFKMEASNFGSLWPDKDTSGSQEFMTEVSREIATNQSSEFEASQVVSMENNLTAITYSPVCLNSDASGCNKVLYASLQDSHLPPEDLYQLCHFNNGEICFPFQQGPLSTDDDGRLFSFDSMTSLTVSSSNYCSLSLKSCEKDGDDEINDDFLAHCSPKLVIQQSIDEIAPLKESTDLLDISNFTPDKFRHSSLLEMSPPDTPSLSPQSTRCESIKTLGTMKGFQEGVPGSLSTVEKIKWDCNTLSQQAQADDGFTLNSHQFQFHMFNDEDSVGLLQKSPCLSTFDEPAGQINTNSKVSKSRKKTSPGKSGAVSQSSSQKNSRKKSPKASNKGVEKPPSKTSRQVPKSTKKGKYVAAVNGEKMQIGIGHSGGQPNSTSSNAKTLTECIQHGGPVASMKIPSQKGLSGDWALGKESRPGWNDMSVVTNTNNLLDDDQREFQEPSYILSNIASGMADVQRFMMASMEPLWEPMEHQGESNTFYSPDSNSLKLKTLKILAGTPQESKKKVTNGSSGATKNHRSVKAVSKSNGKAAIGEPGHADMPGSSEDSRSAFFDKKYSNVNTLGNNGPTHKKLYRHKSSSKGLRDEKYKGKRVEREQAHKDEAGTTSFEKLRDSNYNLLKAETAFGVLPVFEEETHIFQKDI.

Residues 381-405 show a composition bias toward basic and acidic residues; it reads DKKKGKEEVHEDKSIETKDEKDNGE. 6 disordered regions span residues 381 to 415, 505 to 529, 731 to 774, 1158 to 1225, 1372 to 1422, and 1435 to 1479; these read DKKK…KPCG, VNER…PKKR, KKIK…HMSE, FDEP…TKKG, TPQE…EDSR, and TLGN…AGTT. Composition is skewed to polar residues over residues 746-757 and 763-772; these read SPVSEDTSSKAN and TPGTSNSSHM. Low complexity predominate over residues 1180–1193; that stretch reads PGKSGAVSQSSSQK. The segment covering 1442 to 1452 has biased composition (basic residues); it reads THKKLYRHKSS. Over residues 1455–1479 the composition is skewed to basic and acidic residues; sequence GLRDEKYKGKRVEREQAHKDEAGTT.

In terms of tissue distribution, expressed in the brain, particularly during the late embryonic and perinatal stages of development. In the developing brain, it is expressed only in the cortical plate and subplate region but not in the intermediate or ventricular zone.

The protein resides in the nucleus. It localises to the cytoplasm. Involved in neurite outgrowth by regulating cell-cell adhesion via the N-cadherin signaling pathway. May act by regulating expression of protein-coding genes, such as N-cadherins and integrin beta-1 (ITGB1). This is Neurite extension and migration factor from Mus musculus (Mouse).